The chain runs to 66 residues: Large ribosomal subunit protein bL35 (66 aa).

Residues 1–26 (MPKMKTHRGAAKRVKRTASGKLKRSR) show a composition bias toward basic residues. Positions 1–49 (MPKMKTHRGAAKRVKRTASGKLKRSRAFTSHLFANKSTKQKRKLRKASL) are disordered.

Belongs to the bacterial ribosomal protein bL35 family.

This chain is Large ribosomal subunit protein bL35, found in Staphylococcus carnosus (strain TM300).